A 268-amino-acid chain; its full sequence is Interleukin-1 alpha (268 aa).

The propeptide occupies 1-112 (MAKVPDLFED…NTEEEIIKPR (112 aa)). At lysine 82 the chain carries N6-acetyllysine. The interval 82–86 (KKRRL) is nuclear localization signal (NLS). Residue serine 87 is modified to Phosphoserine. Asparagine 102 and asparagine 141 each carry an N-linked (GlcNAc...) asparagine glycan.

The protein belongs to the IL-1 family. Monomer. Interacts with TMED10; the interaction mediates the translocation from the cytoplasm into the ERGIC (endoplasmic reticulum-Golgi intermediate compartment) and thereby secretion. Interacts with IL1R1. Interacts with S100A13; this interaction is the first step in the export of IL1A, followed by direct translocation of this complex across the plasma membrane. In terms of processing, acetylated within its nuclear localization sequence, which impacts subcellular localization. Proteolytic processed by CAPN1 in a calcium-dependent manner. Cleavage from 31 kDa precursor to 18 kDa biologically active molecules. Post-translationally, phosphorylated. Phosphorylation greatly enhances susceptibility to digestion and promotes the conversion of pre-IL1A alpha to the biologically active IL1A.

Its subcellular location is the nucleus. It is found in the cytoplasm. The protein resides in the secreted. Its function is as follows. Cytokine constitutively present intracellularly in nearly all resting non-hematopoietic cells that plays an important role in inflammation and bridges the innate and adaptive immune systems. After binding to its receptor IL1R1 together with its accessory protein IL1RAP, forms the high affinity interleukin-1 receptor complex. Signaling involves the recruitment of adapter molecules such as MYD88, IRAK1 or IRAK4. In turn, mediates the activation of NF-kappa-B and the three MAPK pathways p38, p42/p44 and JNK pathways. Within the cell, acts as an alarmin and cell death results in its liberation in the extracellular space after disruption of the cell membrane to induce inflammation and alert the host to injury or damage. In addition to its role as a danger signal, which occurs when the cytokine is passively released by cell necrosis, directly senses DNA damage and acts as signal for genotoxic stress without loss of cell integrity. In Bubalus carabanensis (Swamp type water buffalo), this protein is Interleukin-1 alpha (IL1A).